A 51-amino-acid polypeptide reads, in one-letter code: DNA-binding protein (51 aa).

The segment at 1 to 51 (MVYRRRRSRSADGTYTRRRRSSGYRRRPGRPRTYRRSRSATRRSGYRRRRY) is disordered. 2 tandem repeats follow at residues 5 to 10 (RRRSRS) and 17 to 22 (RRRRSS). The interval 5–22 (RRRSRSADGTYTRRRRSS) is 2 X 6 AA repeats of R-R-R-R-S-S. Residues 16-51 (TRRRRSSGYRRRPGRPRTYRRSRSATRRSGYRRRRY) are compositionally biased toward basic residues.

Post-translationally, probably phosphorylated in infected cells.

The protein resides in the virion. Its function is as follows. Thought to be responsible for DNA condensation during packaging of the nucleocapsids. This Orgyia pseudotsugata (Douglas-fir tussock moth) protein is DNA-binding protein (P6.5).